Reading from the N-terminus, the 561-residue chain is Small ribosomal subunit protein bS1 (561 aa).

S1 motif domains follow at residues 22–88 (GEVI…LSRE), 106–172 (GDIL…VSRR), 193–261 (GSVI…LGMK), 278–348 (GTRL…LGMK), 365–435 (GDKI…LGIK), and 452–521 (GSLV…LSVK).

The protein belongs to the bacterial ribosomal protein bS1 family.

In terms of biological role, binds mRNA; thus facilitating recognition of the initiation point. It is needed to translate mRNA with a short Shine-Dalgarno (SD) purine-rich sequence. The sequence is that of Small ribosomal subunit protein bS1 (rpsA) from Neisseria meningitidis serogroup B (strain ATCC BAA-335 / MC58).